Consider the following 778-residue polypeptide: Exo-beta-D-glucosaminidase (778 aa).

Substrate-binding positions include Tyr-55, 104-105, 180-181, Glu-308, Glu-349, and Tyr-381; these read GE and DE. Glu-181 serves as the catalytic Proton donor. Glu-349 acts as the Nucleophile in catalysis.

This sequence belongs to the glycosyl hydrolase 35 family. As to quaternary structure, homodimer.

It is found in the cytoplasm. It carries out the reaction beta-D-glucosaminyl-(1-&gt;4)-N-acetyl-D-glucosamine + H2O = D-glucosamine + N-acetyl-D-glucosamine. It participates in glycan degradation; chitin degradation. Functionally, exo-type enzyme that specifically cleaves the non-reducing terminal glycosidic bond of chitooligosaccharides. Catalyzes the hydrolysis of GlcN-GlcNAc to glucosamine (GlcN) and N-acetylglucosamine (GlcNAc). Involved in chitin degradation. Can also hydrolyze chitosan and chitooligosaccharides of various chain lengths. The polypeptide is Exo-beta-D-glucosaminidase (Pyrococcus horikoshii (strain ATCC 700860 / DSM 12428 / JCM 9974 / NBRC 100139 / OT-3)).